The sequence spans 225 residues: Cytidylate kinase (225 aa).

11–19 (GPSGAGKGT) provides a ligand contact to ATP.

This sequence belongs to the cytidylate kinase family. Type 1 subfamily.

The protein localises to the cytoplasm. It catalyses the reaction CMP + ATP = CDP + ADP. The catalysed reaction is dCMP + ATP = dCDP + ADP. The polypeptide is Cytidylate kinase (Mannheimia succiniciproducens (strain KCTC 0769BP / MBEL55E)).